Here is an 89-residue protein sequence, read N- to C-terminus: Signal recognition particle 19 kDa protein (89 aa).

Belongs to the SRP19 family. Part of the signal recognition particle protein translocation system, which is composed of SRP and FtsY. Archaeal SRP consists of a 7S RNA molecule of 300 nucleotides and two protein subunits: SRP54 and SRP19.

It localises to the cytoplasm. Its function is as follows. Involved in targeting and insertion of nascent membrane proteins into the cytoplasmic membrane. Binds directly to 7S RNA and mediates binding of the 54 kDa subunit of the SRP. The polypeptide is Signal recognition particle 19 kDa protein (Methanococcus maripaludis (strain C7 / ATCC BAA-1331)).